The chain runs to 547 residues: Natural resistance-associated macrophage protein 1 (547 aa).

A disordered region spans residues 1–30 (MTGDKDPQSVSRPNYGSISHPPSSEPQQEP). Topologically, residues 1–54 (MTGDKDPQSVSRPNYGSISHPPSSEPQQEPLRTTYLSEKIPIPDTEPGTFSLRK) are cytoplasmic. The segment covering 8–17 (QSVSRPNYGS) has biased composition (polar residues). Residues 21 to 30 (PPSSEPQQEP) show a composition bias toward low complexity. The helical transmembrane segment at 55-75 (LWAFTGPGFLMSIAFLDPGNI) threads the bilayer. At 76–81 (ESDLQA) the chain is on the extracellular side. A helical membrane pass occupies residues 82-102 (GAVAGFKLLWVLLWATVLGLL). Residues 103–139 (CQRLAARLGVVTGKDLGEICHLYYPKVPRTLLWLTIE) are Cytoplasmic-facing. A helical transmembrane segment spans residues 140-160 (LAIVGSDMQEVIGTAIAFSLL). The Extracellular segment spans residues 161-164 (SAGR). Residues 165–185 (IPLWGGVLITIVDTFFFLFLD) form a helical membrane-spanning segment. Topologically, residues 186–193 (NYGLRKLE) are cytoplasmic. Residues 194–214 (AFFGILITIMALTFGYEYVVA) form a helical membrane-spanning segment. The Extracellular portion of the chain corresponds to 215–240 (RPAQVALLQGLLLPSCPGCGRPELLQ). Residues 241-261 (AVGIVGAIIMPHNIYLHSALV) traverse the membrane as a helical segment. Topologically, residues 262–286 (KSREIDRSRRPDIREANMYFLIEAS) are cytoplasmic. A helical transmembrane segment spans residues 287 to 307 (IALSVSFFINLFVVAVFGQAF). Residues 308-346 (YQQTNEAAFNVCANSSLHDYAKIFPRNNLTVEVDIYQGG) lie on the Extracellular side of the membrane. 2 N-linked (GlcNAc...) asparagine glycosylation sites follow: N321 and N335. Residues 347-367 (VMLGCVFGPAALYIWAVGLLA) form a helical membrane-spanning segment. Topologically, residues 368–394 (AGQSSTMTGTYAGQFVMEGFLRLRWSR) are cytoplasmic. The helical transmembrane segment at 395-415 (FARVLLTRSCAILPTVLVVVF) threads the bilayer. The Extracellular segment spans residues 416–432 (RDLKDLSGLNDLLNVLQ). The chain crosses the membrane as a helical span at residues 433–453 (SLLLPFAVLPILTFTSMPALM). The Cytoplasmic segment spans residues 454–464 (QEFANGRLSKA). The helical transmembrane segment at 465–485 (ITSFIMALVCAINLYFVVIYL) threads the bilayer. Residues 486–492 (PSLPHPA) are Extracellular-facing. The helical transmembrane segment at 493 to 513 (YFILVALLAIVYLGLTTYLVW) threads the bilayer. The Cytoplasmic segment spans residues 514-547 (TCFIAHGVTLLAHSSHQHFLYGLPDVEEKGKISG).

It belongs to the NRAMP family.

The protein localises to the late endosome membrane. It is found in the lysosome membrane. The catalysed reaction is Zn(2+)(in) + H(+)(out) = Zn(2+)(out) + H(+)(in). It catalyses the reaction Fe(2+)(in) + H(+)(out) = Fe(2+)(out) + H(+)(in). The enzyme catalyses Mn(2+)(in) + H(+)(out) = Mn(2+)(out) + H(+)(in). Functionally, macrophage-specific antiporter that fluxes metal ions in either direction against a proton gradient. Localized to late endosomal lysosomal membranes, delivers bivalent cations from the cytosol into these acidic compartments where they may directly affect antimicrobial activity. Involved in iron metabolism and host natural resistance to infection with intracellular parasites. Pathogen resistance involves sequestration of Fe(2+) and Mn(2+), cofactors of both prokaryotic and eukaryotic catalases and superoxide dismutases, not only to protect the macrophage against its own generation of reactive oxygen species, but to deny the cations to the pathogen for synthesis of its protective enzymes. This chain is Natural resistance-associated macrophage protein 1 (SLC11A1), found in Canis lupus familiaris (Dog).